The chain runs to 490 residues: CUGBP Elav-like family member 1 (490 aa).

RRM domains lie at 16–99 and 108–188; these read IKMF…PADS and RKLF…FADT. Residues 283–312 are disordered; the sequence is PSAGSALTTSSSPLSILTSSGSSPSSNNNS. The RRM 3 domain maps to 405–483; that stretch reads ANLFIYHLPQ…KRLKVQLKRS (79 aa).

Belongs to the CELF/BRUNOL family. In terms of assembly, oligomer. Oligomerization is required for RNA-binding and EDEN-dependent deadenylation. In terms of processing, phosphorylated during oocyte maturation and dephosphorylated following egg activation. Dephosphorylation is calcium dependent and correlates with the increase in the activity of EDEN-dependent deadenylation.

It is found in the nucleus. The protein localises to the cytoplasm. Functionally, RNA-binding protein implicated in the regulation of several post-transcriptional events. May be involved in pre-mRNA alternative splicing, mRNA translation activation and stability. Mediates the rapid and sequence-specific cytoplasmic deadenylation of EDEN-containing maternal mRNAs following fertilization. Binds to AU-rich sequences (AREs) of jun mRNA. Binds to the embryonic deadenylation element (EDEN) motif localized in the 3'-UTR of maternal mRNAs. Binds to RNA containing several repeats of the consensus sequence 5'-UGU-3'. EDEN-dependent deadenylation is enhanced by the presence of an additional cis element composed of three AUU repeats. The sequence is that of CUGBP Elav-like family member 1 (celf1) from Xenopus tropicalis (Western clawed frog).